The primary structure comprises 253 residues: MRKPIIAGNWKMHKTLTEAVQFVEEVKGLVPPKAEVDSVICAPFLFLDRLVQNTNGTDLQIGAQTMHFADQGAYTGEVSPVMLKDLGVTYVILGHSERRQMFAETDETVNKKVLAAFTRGLVPIICCGETLEEREAGQTNAVVASQVEKALAGLTPDQVKQAVIAYEPIWAIGTGKSSTAEDANNVCGHIRSVVARLFGAEAAEAIRIQYGGSVKPENISDFLAQEHIDGALVGGASLEPASFLKLVEAGRHE.

A substrate-binding site is contributed by 9–11 (NWK). Residue His95 is the Electrophile of the active site. Catalysis depends on Glu167, which acts as the Proton acceptor. Substrate-binding positions include Gly173, Ser213, and 234–235 (GG). Ser213 is modified (phosphoserine).

This sequence belongs to the triosephosphate isomerase family. In terms of assembly, homodimer.

The protein resides in the cytoplasm. The enzyme catalyses D-glyceraldehyde 3-phosphate = dihydroxyacetone phosphate. Its pathway is carbohydrate biosynthesis; gluconeogenesis. It participates in carbohydrate degradation; glycolysis; D-glyceraldehyde 3-phosphate from glycerone phosphate: step 1/1. In terms of biological role, involved in the gluconeogenesis. Catalyzes stereospecifically the conversion of dihydroxyacetone phosphate (DHAP) to D-glyceraldehyde-3-phosphate (G3P). This is Triosephosphate isomerase from Geobacillus thermodenitrificans (strain NG80-2).